The primary structure comprises 352 residues: MSLNYFDIMVLDCLCKINGERSGSAVFHLFKGKRSSQTIQDAGLFQTAKYFGMAAKCSRSDISASLDKLEKHSYLAPMSESDTYKVTASGAAVLRHALSERPWPVHCHGAHYQQAAGVLWKRLSLLVQVLSHKQQGSRQYIPVTKDHKTLHWVKKYLSRHTDHIEMAKSLFAMLEAHLKKIENKAAQIFVYSLTSHHRIGYTSRQLADTLKEDEWYVYIMFWASVHYFIHSLPECEDALLKDLLSDVHLDNALTESTRKTWQMVKQGFPIQRIAEIRKLKTATIEDHIVEISLHEPAFMINDYVSAEDQLQIAEFAKRMRTNKIKQIRDGLEQRFSYFQIRLALTKQVQQYD.

As to quaternary structure, interacts with RecS and SSB (ssbA); the 6 C-terminal residues of SSB are required for interaction with YpbB.

It is found in the cytoplasm. The protein resides in the nucleoid. The protein is Protein YpbB (ypbB) of Bacillus subtilis (strain 168).